The primary structure comprises 729 residues: Fibroblast growth factor receptor 2 (729 aa).

The N-terminal stretch at 1–21 is a signal peptide; it reads MFSWSYLMGLVMVATATLSLA. The Extracellular portion of the chain corresponds to 22–285; that stretch reads RPSYNIAEDT…ELDSSSEYTE (264 aa). The segment at 29–62 is disordered; that stretch reads EDTTLEPEDANSSGDDEDDNDGSEDFTNDNNHMR. The segment covering 31 to 55 has biased composition (acidic residues); it reads TTLEPEDANSSGDDEDDNDGSEDFT. Asn39 carries an N-linked (GlcNAc...) asparagine glycan. Ig-like C2-type domains follow at residues 64-157 and 166-268; these read PYWT…YHLD and PILQ…AWLT. Residues 71-88 are heparin-binding; it reads KLEKKLHAVPAANTVKFR. A disulfide bond links Cys89 and Cys141. N-linked (GlcNAc...) asparagine glycans are attached at residues Asn138, Asn151, Asn175, Asn207, Asn228, Asn241, and Asn256. A disulfide bond links Cys188 and Cys252. The helical transmembrane segment at 286 to 306 threads the bilayer; that stretch reads IAIYCVGGFLITCMIGTIMVC. The Cytoplasmic portion of the chain corresponds to 307-729; sequence HMKGRGKKSD…SQHTNGTIKT (423 aa). Position 374 is a phosphotyrosine; by autocatalysis (Tyr374). The region spanning 389–678 is the Protein kinase domain; the sequence is LTLGKPLGEG…LTQTTNEEYL (290 aa). ATP contacts are provided by residues 395–403, Lys425, 473–475, and Asn479; these read LGEGCFGQV and EYA. Tyr494 bears the Phosphotyrosine; by autocatalysis mark. Catalysis depends on Asp534, which acts as the Proton acceptor. Residues Tyr564, Tyr565, and Tyr677 each carry the phosphotyrosine; by autocatalysis modification. Residues 683–729 are disordered; that stretch reads PLEQYSPSYPDTRSSCSSGDDSVFSPDAMPYDPCLPKSQHTNGTIKT. The segment covering 693–707 has biased composition (low complexity); that stretch reads DTRSSCSSGDDSVFS. Positions 720-729 are enriched in polar residues; it reads SQHTNGTIKT.

The protein belongs to the protein kinase superfamily. Tyr protein kinase family. Fibroblast growth factor receptor subfamily. Monomer. Homodimer after ligand binding. Autophosphorylated. Binding of FGF family members together with heparan sulfate proteoglycan or heparin promotes receptor dimerization and autophosphorylation on tyrosine residues. Autophosphorylation occurs in trans between the two FGFR molecules present in the dimer. In terms of processing, N-glycosylated in the endoplasmic reticulum. The N-glycan chains undergo further maturation to an Endo H-resistant form in the Golgi apparatus. Post-translationally, ubiquitinated. FGFR2 is rapidly ubiquitinated after autophosphorylation, leading to internalization and degradation. Subject to degradation both in lysosomes and by the proteasome.

The protein localises to the cell membrane. It is found in the golgi apparatus. Its subcellular location is the cytoplasmic vesicle. The enzyme catalyses L-tyrosyl-[protein] + ATP = O-phospho-L-tyrosyl-[protein] + ADP + H(+). Its activity is regulated as follows. Present in an inactive conformation in the absence of bound ligand. Ligand binding leads to dimerization and activation by autophosphorylation on tyrosine residues. Functionally, tyrosine-protein kinase that acts as a cell-surface receptor for fibroblast growth factors and plays an essential role in the regulation of cell proliferation, differentiation, migration and apoptosis, and in the regulation of embryonic development. Required for normal embryonic patterning, limb bud development, lung morphogenesis, osteogenesis and skin development. Plays an essential role in the regulation of osteoblast differentiation, proliferation and apoptosis, and is required for normal skeleton development. Promotes cell proliferation in keratinocytes and immature osteoblasts, but promotes apoptosis in differentiated osteoblasts. Phosphorylates PLCG1, FRS2 and PAK4. Ligand binding leads to the activation of several signaling cascades. Activation of PLCG1 leads to the production of the cellular signaling molecules diacylglycerol and inositol 1,4,5-trisphosphate. Phosphorylation of FRS2 triggers recruitment of GRB2, GAB1, PIK3R1 and SOS1, and mediates activation of RAS, MAPK1/ERK2, MAPK3/ERK1 and the MAP kinase signaling pathway, as well as of the AKT1 signaling pathway. FGFR2 signaling is down-regulated by ubiquitination, internalization and degradation. Mutations that lead to constitutive kinase activation or impair normal FGFR2 maturation, internalization and degradation lead to aberrant signaling. Over-expressed FGFR2 promotes activation of STAT1. The sequence is that of Fibroblast growth factor receptor 2 (FGFR2) from Notophthalmus viridescens (Eastern newt).